The chain runs to 399 residues: Elongation factor Tu (399 aa).

The tr-type G domain maps to 10–204 (KPHVNIGTIG…AVDANIPEPV (195 aa)). The interval 19 to 26 (GHVDHGKT) is G1. Residue 19 to 26 (GHVDHGKT) coordinates GTP. Thr-26 contacts Mg(2+). The interval 60-64 (GITIN) is G2. The tract at residues 81–84 (DCPG) is G3. GTP is bound by residues 81–85 (DCPGH) and 136–139 (NKCD). The segment at 136 to 139 (NKCD) is G4. A G5 region spans residues 174–176 (SGL).

This sequence belongs to the TRAFAC class translation factor GTPase superfamily. Classic translation factor GTPase family. EF-Tu/EF-1A subfamily. In terms of assembly, monomer.

Its subcellular location is the cytoplasm. The enzyme catalyses GTP + H2O = GDP + phosphate + H(+). Functionally, GTP hydrolase that promotes the GTP-dependent binding of aminoacyl-tRNA to the A-site of ribosomes during protein biosynthesis. The polypeptide is Elongation factor Tu (Synechococcus sp. (strain RCC307)).